The chain runs to 247 residues: UPF0273 protein PH0284 (247 aa).

Residues 3–247 form the KaiC domain; sequence RRVKTGIPGV…VLKRGKVLEL (245 aa). 30–37 serves as a coordination point for ATP; the sequence is GGPGTGKT.

This sequence belongs to the UPF0273 family.

The chain is UPF0273 protein PH0284 from Pyrococcus horikoshii (strain ATCC 700860 / DSM 12428 / JCM 9974 / NBRC 100139 / OT-3).